A 370-amino-acid chain; its full sequence is MALPWELEEDILSRLPPISLVRFRTVSKHWNSLFNDKTFINNHLSRSRPEFIILTNSKIYSVDIIDHNNIDPTIRLHEIPTYDIHSRGTDLNRTIINTCDEFLFYNYRYWDNMTALWNPWLRQVRWIEYANQEFCVFGLGYDNSRPEKVYKILGHLFCHGKVLRDQKVVIYECASDSLRFIDRPEDDDWPITETAKRSNVSLNGNLYWFGCSNYENDEYYIRIFDFSTEDFKPFCLLPCQMSHSTDELVLAVYKGDRFSLLKQCSVTREIGVWVTKERISNDNGNGGEGVEWLKLMTLSKPNLPKLFGTVSYFIYGKTLYMCNGDDETALACIYIVREDVCKKFQIGSGNINCRHCVYTPNLLSLPLFIG.

One can recognise an F-box domain in the interval 1-43; the sequence is MALPWELEEDILSRLPPISLVRFRTVSKHWNSLFNDKTFINNH.

In terms of tissue distribution, ubiquitous, at low levels.

Negatively regulates a plant defense signaling pathway which is independent of salicylic acid (SA) and systemic acquired resistance (SAR). Confers sensitivity to P.syringae and P.parasitica. In Arabidopsis thaliana (Mouse-ear cress), this protein is Protein SUPPRESSOR OF NIM1 1 (SON1).